Here is a 650-residue protein sequence, read N- to C-terminus: Threonine--tRNA ligase, chloroplastic/mitochondrial 2 (650 aa).

Residues cysteine 347, histidine 398, and histidine 524 each contribute to the Zn(2+) site.

This sequence belongs to the class-II aminoacyl-tRNA synthetase family.

It is found in the plastid. It localises to the chloroplast. The protein localises to the mitochondrion. The catalysed reaction is tRNA(Thr) + L-threonine + ATP = L-threonyl-tRNA(Thr) + AMP + diphosphate + H(+). This is Threonine--tRNA ligase, chloroplastic/mitochondrial 2 from Arabidopsis thaliana (Mouse-ear cress).